Consider the following 76-residue polypeptide: Large ribosomal subunit protein uL24 (76 aa).

This sequence belongs to the universal ribosomal protein uL24 family. In terms of assembly, part of the 50S ribosomal subunit.

In terms of biological role, one of two assembly initiator proteins, it binds directly to the 5'-end of the 23S rRNA, where it nucleates assembly of the 50S subunit. Its function is as follows. One of the proteins that surrounds the polypeptide exit tunnel on the outside of the subunit. The sequence is that of Large ribosomal subunit protein uL24 from Wolinella succinogenes (strain ATCC 29543 / DSM 1740 / CCUG 13145 / JCM 31913 / LMG 7466 / NCTC 11488 / FDC 602W) (Vibrio succinogenes).